We begin with the raw amino-acid sequence, 448 residues long: Tubulin beta-1 chain (448 aa).

GTP is bound by residues Gln11, Glu72, Ser141, Gly145, Thr146, Gly147, Asn207, and Asn229. Glu72 contacts Mg(2+). Positions 424–448 are disordered; that stretch reads QQYQDAGMDDDEAEEAYEEEEPVEE. Residues 430–448 are compositionally biased toward acidic residues; it reads GMDDDEAEEAYEEEEPVEE.

It belongs to the tubulin family. As to quaternary structure, dimer of alpha and beta chains. A typical microtubule is a hollow water-filled tube with an outer diameter of 25 nm and an inner diameter of 15 nM. Alpha-beta heterodimers associate head-to-tail to form protofilaments running lengthwise along the microtubule wall with the beta-tubulin subunit facing the microtubule plus end conferring a structural polarity. Microtubules usually have 13 protofilaments but different protofilament numbers can be found in some organisms and specialized cells. Requires Mg(2+) as cofactor.

Its subcellular location is the cytoplasm. The protein resides in the cytoskeleton. In terms of biological role, tubulin is the major constituent of microtubules, a cylinder consisting of laterally associated linear protofilaments composed of alpha- and beta-tubulin heterodimers. Microtubules grow by the addition of GTP-tubulin dimers to the microtubule end, where a stabilizing cap forms. Below the cap, tubulin dimers are in GDP-bound state, owing to GTPase activity of alpha-tubulin. The sequence is that of Tubulin beta-1 chain (TUB1) from Colletotrichum gloeosporioides (Anthracnose fungus).